A 459-amino-acid chain; its full sequence is Zinc finger transcription factor lin-29 (459 aa).

Positions 1 to 14 (MDQTVLDSAFNSPV) are enriched in polar residues. A disordered region spans residues 1–73 (MDQTVLDSAF…GSTGSTPAHH (73 aa)). Over residues 16 to 56 (SGIAGTTTGSGSTTHFGVGTNFKVSVRSSSRSTDGTDSTDG) the composition is skewed to low complexity. Residues 57 to 73 (ANSDNVTGSTGSTPAHH) are compositionally biased toward polar residues. 5 C2H2-type zinc fingers span residues 151 to 173 (YKCT…MRIH), 180 to 202 (GPCN…IRTH), 208 to 232 (YKCK…SRCH), 238 to 260 (FKCN…IPKH), and 269 to 291 (HICP…MTKH). The interval 390–406 (PGFNMITPLENIQRYNG) is interacts with mab-10. Positions 423–444 (VSSTPSSTSSSSAGSSSSQGGV) are enriched in low complexity. The interval 423–459 (VSSTPSSTSSSSAGSSSSQGGVFNPQSLINNMKNHSY) is disordered. The span at 446–459 (NPQSLINNMKNHSY) shows a compositional bias: polar residues.

As to quaternary structure, interacts (via C-terminus) with transcription cofactor mab-10. As to expression, expressed in lateral hypodermal seam cells (at protein level).

Its subcellular location is the nucleus. In terms of biological role, transcription factor which regulates the expression of various genes, including those involved in cuticle synthesis and maintenance, such as collagens, and in lipid metabolism. Binds to promoter regions of genes, at 5'-[(T/G)TTTTTT(A/T/C/G)]-3' consensus sequences. Heterochronic protein which controls the choice of stage specific cell fates, including at the juvenile to adult transition. Promotes differentiation, together with transcriptional cofactor mab-10, perhaps as part of a transcriptional complex. Required for vulval morphogenesis and egg laying; perhaps by acting in a subset of the lateral seam cells. Involved in the exit of seam cells from the cell cycle. Required for specification of uterine pi-cell fate, acting upstream of lin-12 Notch signaling, perhaps via maintenance of lag-2 expression in the anchor cell (AC). Involved in morphogenesis of the specialized male tail used in mating. Acts cell non-autonomously from the hypodermis to regulate expression of genes in the intestine, including genes involved in lipid metabolism. May regulate vitellogenesis via the mTORC2 signaling mediated pathway, independently of daf-16. May promote nuclear accumulation of mab-10 in seam cells post-transcriptionally. Dispensable for seam cell fusion. Its function is as follows. Required for seam cell fusion. This is Zinc finger transcription factor lin-29 from Caenorhabditis elegans.